A 315-amino-acid chain; its full sequence is Glutathione synthetase (315 aa).

One can recognise an ATP-grasp domain in the interval 125–310; that stretch reads KLYTAWFADL…ITGMLMDAIE (186 aa). ATP is bound at residue 151–207; that stretch reads WEKHGDIIMKPLDGMGGASIFRVKEGDPNIGVIAETLTELGNRYCMAQNYLPAIKDG. Mg(2+) is bound by residues Glu281 and Asn283.

It belongs to the prokaryotic GSH synthase family. Mg(2+) serves as cofactor. It depends on Mn(2+) as a cofactor.

The enzyme catalyses gamma-L-glutamyl-L-cysteine + glycine + ATP = glutathione + ADP + phosphate + H(+). The protein operates within sulfur metabolism; glutathione biosynthesis; glutathione from L-cysteine and L-glutamate: step 2/2. This Salmonella typhimurium (strain LT2 / SGSC1412 / ATCC 700720) protein is Glutathione synthetase.